A 341-amino-acid polypeptide reads, in one-letter code: METPFYGEEALSGLAAGASSVAGAAGAPGGGGFAPPGRAFPGAPPTSSMLKKDALTLSLAEQGAAGLKPGSATAPSALRPDGAPDGLLASPDLGLLKLASPELERLIIQSNGLVTTTPTSTQFLYPKVAASEEQEFAEGFVKALEDLHKQSQLGAATAATSGAPAPPAPADLAATPGATETPVYANLSSFAGGAGPPGGAATVAFAAEPVPFPPPPGALGPPPPPHPPRLAALKDEPQTVPDVPSFGDSPPLSPIDMDTQERIKAERKRLRNRIAASKCRKRKLERISRLEEKVKTLKSQNTELASTASLLREQVAQLKQKVLSHVNSGCQLLPQHQVPAY.

The segment at 21-49 is disordered; sequence VAGAAGAPGGGGFAPPGRAFPGAPPTSSM. Residues 35–47 carry the Menin-binding motif (MBM) motif; it reads PPGRAFPGAPPTS. The MAP kinase docking motif; essential for its phosphorylation signature appears at 51–60; it reads KKDALTLSLA. The tract at residues 65–85 is disordered; that stretch reads AGLKPGSATAPSALRPDGAPD. The residue at position 90 (Ser-90) is a Phosphoserine. A Phosphoserine; by MAPK8 modification is found at Ser-100. Thr-117 is modified (phosphothreonine). The disordered stretch occupies residues 155–176; that stretch reads AATAATSGAPAPPAPADLAATP. Residues Ser-245, Ser-249, and Ser-253 each carry the phosphoserine modification. The tract at residues 262–289 is basic motif; sequence RIKAERKRLRNRIAASKCRKRKLERISR. Residues 262–325 form the bZIP domain; the sequence is RIKAERKRLR…AQLKQKVLSH (64 aa). The leucine-zipper stretch occupies residues 290–318; that stretch reads LEEKVKTLKSQNTELASTASLLREQVAQL.

Belongs to the bZIP family. Jun subfamily. As to quaternary structure, heterodimer; binds DNA as a heterodimer. Component of an AP-1 transcription factor complex composed of JUN-FOS heterodimers. As part of the AP-1 transcription factor complex, forms heterodimers with FOS proteins, thereby binding to the AP-1 consensus sequence and stimulating transcription. Forms heterodimers with FOSB; thereby binding to the AP-1 consensus sequence. Interacts (via MBM motif) with MEN1; this interaction represses transcriptional activation. Interacts with MAPK10; this interaction is inhibited in the presence of MEN1. In terms of processing, phosphorylated by MAP kinases MAPK8 and MAPK10; phosphorylation is inhibited in the presence of MEN1.

It is found in the nucleus. In terms of biological role, transcription factor binding AP-1 sites. Heterodimerizes with proteins of the FOS family to form an AP-1 transcription factor complex, thereby enhancing their DNA binding activity to an AP-1 consensus sequence 3'-TGA[GC]TCA-5' and enhancing their transcriptional activity. The sequence is that of Transcription factor JunD (Jund) from Rattus norvegicus (Rat).